The chain runs to 482 residues: ATP synthase subunit beta (482 aa).

ATP is bound at residue 161–168 (GGAGVGKT).

The protein belongs to the ATPase alpha/beta chains family. F-type ATPases have 2 components, CF(1) - the catalytic core - and CF(0) - the membrane proton channel. CF(1) has five subunits: alpha(3), beta(3), gamma(1), delta(1), epsilon(1). CF(0) has four main subunits: a(1), b(1), b'(1) and c(9-12).

The protein localises to the cellular thylakoid membrane. It carries out the reaction ATP + H2O + 4 H(+)(in) = ADP + phosphate + 5 H(+)(out). Produces ATP from ADP in the presence of a proton gradient across the membrane. The catalytic sites are hosted primarily by the beta subunits. This chain is ATP synthase subunit beta, found in Gloeothece citriformis (strain PCC 7424) (Cyanothece sp. (strain PCC 7424)).